The following is a 163-amino-acid chain: Large ribosomal subunit protein uL11 (163 aa).

The disordered stretch occupies residues 1–26; sequence MAETIEVLVAGGQADPGPPLGPELGP.

The protein belongs to the universal ribosomal protein uL11 family. In terms of assembly, part of the ribosomal stalk of the 50S ribosomal subunit. Interacts with L10 and the large rRNA to form the base of the stalk. L10 forms an elongated spine to which L12 dimers bind in a sequential fashion forming a multimeric L10(L12)X complex.

Its function is as follows. Forms part of the ribosomal stalk which helps the ribosome interact with GTP-bound translation factors. The polypeptide is Large ribosomal subunit protein uL11 (Halobacterium salinarum (strain ATCC 29341 / DSM 671 / R1)).